A 548-amino-acid chain; its full sequence is Mercuric reductase (548 aa).

The 65-residue stretch at 1–65 folds into the HMA domain; the sequence is MTEITVNGMT…AIAALGYQGS (65 aa). A metal cation is bound by residues Cys-11 and Cys-14. The FAD site is built by Ala-97, Gly-117, and Thr-122. Cysteines 123 and 128 form a disulfide. The FAD site is built by Lys-132, Ala-198, Asp-390, and Val-398. The Hg(2+) site is built by Cys-545 and Cys-546.

The protein belongs to the class-I pyridine nucleotide-disulfide oxidoreductase family. Homodimer. FAD serves as cofactor.

The enzyme catalyses Hg + NADP(+) + H(+) = Hg(2+) + NADPH. Functionally, resistance to Hg(2+) in bacteria appears to be governed by a specialized system which includes mercuric reductase. MerA protein is responsible for volatilizing mercury as Hg(0). This is Mercuric reductase (merA) from Pseudomonas fluorescens.